Here is a 579-residue protein sequence, read N- to C-terminus: Putative adenine deaminase OB0751 (579 aa).

It belongs to the metallo-dependent hydrolases superfamily. Adenine deaminase family.

The catalysed reaction is adenine + H2O + H(+) = hypoxanthine + NH4(+). This Oceanobacillus iheyensis (strain DSM 14371 / CIP 107618 / JCM 11309 / KCTC 3954 / HTE831) protein is Putative adenine deaminase OB0751.